The sequence spans 445 residues: Transmembrane protein 184C (445 aa).

Helical transmembrane passes span 15–35 (LVVL…VWEL), 46–66 (AWFI…WGIL), 84–104 (ILWM…YPNI), 177–197 (YTVV…VGVY), 210–230 (YLVI…VLFY), 252–272 (VVFV…VGVI), and 285–305 (AVAT…AAIA). Disordered regions lie at residues 369–393 (EHTS…SSPM) and 421–445 (TSAT…LDRS). Residues 370–390 (HTSLLSSSTQDPISDASSMPS) show a composition bias toward polar residues.

Belongs to the TMEM184 family.

The protein localises to the membrane. In terms of biological role, may play a role in cell growth. The chain is Transmembrane protein 184C (TMEM184C) from Gallus gallus (Chicken).